Reading from the N-terminus, the 365-residue chain is Aminomethyltransferase (365 aa).

Belongs to the GcvT family. In terms of assembly, the glycine cleavage system is composed of four proteins: P, T, L and H.

It carries out the reaction N(6)-[(R)-S(8)-aminomethyldihydrolipoyl]-L-lysyl-[protein] + (6S)-5,6,7,8-tetrahydrofolate = N(6)-[(R)-dihydrolipoyl]-L-lysyl-[protein] + (6R)-5,10-methylene-5,6,7,8-tetrahydrofolate + NH4(+). In terms of biological role, the glycine cleavage system catalyzes the degradation of glycine. The polypeptide is Aminomethyltransferase (Chlorobaculum parvum (strain DSM 263 / NCIMB 8327) (Chlorobium vibrioforme subsp. thiosulfatophilum)).